Consider the following 1033-residue polypeptide: Putative U-box domain-containing protein 42 (1033 aa).

The disordered stretch occupies residues 145 to 226 (SQSQMTDIPD…SSNASSQRKY (82 aa)). The segment covering 200-226 (LSKSQSQSTEIPDIPSQSSNASSQRKY) has biased composition (polar residues). One can recognise a U-box domain in the interval 245–322 (PPYQAFICPL…QEWKVRNEAA (78 aa)). 5 ARM repeats span residues 483–522 (PENI…EIDI), 523–562 (GHEK…HISL), 564–608 (HPNN…NILE), 610–659 (GLEH…SLSK), and 665–704 (ATIV…ALTP).

The catalysed reaction is S-ubiquitinyl-[E2 ubiquitin-conjugating enzyme]-L-cysteine + [acceptor protein]-L-lysine = [E2 ubiquitin-conjugating enzyme]-L-cysteine + N(6)-ubiquitinyl-[acceptor protein]-L-lysine.. It participates in protein modification; protein ubiquitination. Its function is as follows. Functions as an E3 ubiquitin ligase. The protein is Putative U-box domain-containing protein 42 (PUB42) of Arabidopsis thaliana (Mouse-ear cress).